The sequence spans 302 residues: Sulfate adenylyltransferase subunit 2 (302 aa).

It belongs to the PAPS reductase family. CysD subfamily. In terms of assembly, heterodimer composed of CysD, the smaller subunit, and CysN.

The enzyme catalyses sulfate + ATP + H(+) = adenosine 5'-phosphosulfate + diphosphate. The protein operates within sulfur metabolism; hydrogen sulfide biosynthesis; sulfite from sulfate: step 1/3. Functionally, with CysN forms the ATP sulfurylase (ATPS) that catalyzes the adenylation of sulfate producing adenosine 5'-phosphosulfate (APS) and diphosphate, the first enzymatic step in sulfur assimilation pathway. APS synthesis involves the formation of a high-energy phosphoric-sulfuric acid anhydride bond driven by GTP hydrolysis by CysN coupled to ATP hydrolysis by CysD. The chain is Sulfate adenylyltransferase subunit 2 from Escherichia coli O7:K1 (strain IAI39 / ExPEC).